Consider the following 148-residue polypeptide: Sporulation inhibitor of replication protein SirA (148 aa).

The protein belongs to the SirA family. As to quaternary structure, interacts with DnaA. Forms a 1:1 complex with domain I of DnaA.

It is found in the cytoplasm. Its function is as follows. Inhibits DNA replication initiation during sporulation, preventing overinitiation and thus enforcing diploidy; probably the main regulator of sporulation replication initiation under Spo0A control. During sporulation SirA prevents DnaA association with the replication origin to prevent excessive chromosome replication. Alternatively SirA binds to domain I of DnaA and prevent its interaction with DnaD, preventing DNA replication initiation. Upon ectopic expression during vegetative growth reduces chromosome copy number, leading to elongated cells with that can have a single nucleoid or be anucleate. Ectopic expression during vegetative growth blocks DnaA at oriC while blocking recruitment of DnaD to oriC. Plays a significant role during the onset of sporulation. This is Sporulation inhibitor of replication protein SirA from Bacillus subtilis (strain 168).